Consider the following 62-residue polypeptide: Temporin-1PLa (62 aa).

The N-terminal stretch at 1 to 22 (MFTSKKSLLLLFFLGTINLSLC) is a signal peptide. Positions 23 to 45 (EEERDADEEERRDDPDEMNVEVE) are excised as a propeptide. Residue Ile-60 is modified to Isoleucine amide.

Expressed by the skin glands.

The protein localises to the secreted. Its function is as follows. Antimicrobial activity against the Gram-positive bacterium S.aureus. In Lithobates palustris (Pickerel frog), this protein is Temporin-1PLa.